A 234-amino-acid polypeptide reads, in one-letter code: Glucosamine-6-phosphate deaminase (234 aa).

D62 (proton acceptor; for enolization step) is an active-site residue. The For ring-opening step role is filled by N128. H130 acts as the Proton acceptor; for ring-opening step in catalysis. The For ring-opening step role is filled by E135.

It belongs to the glucosamine/galactosamine-6-phosphate isomerase family. NagB subfamily.

The catalysed reaction is alpha-D-glucosamine 6-phosphate + H2O = beta-D-fructose 6-phosphate + NH4(+). Its pathway is amino-sugar metabolism; N-acetylneuraminate degradation; D-fructose 6-phosphate from N-acetylneuraminate: step 5/5. Its function is as follows. Catalyzes the reversible isomerization-deamination of glucosamine 6-phosphate (GlcN6P) to form fructose 6-phosphate (Fru6P) and ammonium ion. The polypeptide is Glucosamine-6-phosphate deaminase (Streptococcus pyogenes serotype M49 (strain NZ131)).